A 600-amino-acid chain; its full sequence is Elongation factor 4 (600 aa).

Positions 4–186 (SKIRNFSIIA…EIVKKIPAPQ (183 aa)) constitute a tr-type G domain. Residues 16-21 (DHGKST) and 133-136 (NKID) contribute to the GTP site.

The protein belongs to the TRAFAC class translation factor GTPase superfamily. Classic translation factor GTPase family. LepA subfamily.

Its subcellular location is the cell inner membrane. It carries out the reaction GTP + H2O = GDP + phosphate + H(+). Its function is as follows. Required for accurate and efficient protein synthesis under certain stress conditions. May act as a fidelity factor of the translation reaction, by catalyzing a one-codon backward translocation of tRNAs on improperly translocated ribosomes. Back-translocation proceeds from a post-translocation (POST) complex to a pre-translocation (PRE) complex, thus giving elongation factor G a second chance to translocate the tRNAs correctly. Binds to ribosomes in a GTP-dependent manner. In Trichlorobacter lovleyi (strain ATCC BAA-1151 / DSM 17278 / SZ) (Geobacter lovleyi), this protein is Elongation factor 4.